A 210-amino-acid polypeptide reads, in one-letter code: 7-carboxy-7-deazaguanine synthase (210 aa).

Substrate is bound by residues 12–14 (LQG) and Arg27. In terms of domain architecture, Radical SAM core spans 18 to 210 (HAGRASVFCR…VQTHKSLGIR (193 aa)). The [4Fe-4S] cluster site is built by Cys31, Cys46, and Cys49. Thr51 is a binding site for Mg(2+). Substrate is bound at residue Thr90. Residues Gly92, 133 to 135 (SPK), and 173 to 176 (QPMD) contribute to the S-adenosyl-L-methionine site.

The protein belongs to the radical SAM superfamily. 7-carboxy-7-deazaguanine synthase family. Homodimer. [4Fe-4S] cluster is required as a cofactor. It depends on S-adenosyl-L-methionine as a cofactor. Requires Mg(2+) as cofactor.

It catalyses the reaction 6-carboxy-5,6,7,8-tetrahydropterin + H(+) = 7-carboxy-7-deazaguanine + NH4(+). It functions in the pathway purine metabolism; 7-cyano-7-deazaguanine biosynthesis. Functionally, catalyzes the complex heterocyclic radical-mediated conversion of 6-carboxy-5,6,7,8-tetrahydropterin (CPH4) to 7-carboxy-7-deazaguanine (CDG), a step common to the biosynthetic pathways of all 7-deazapurine-containing compounds. The chain is 7-carboxy-7-deazaguanine synthase from Bradyrhizobium diazoefficiens (strain JCM 10833 / BCRC 13528 / IAM 13628 / NBRC 14792 / USDA 110).